The primary structure comprises 120 residues: MENLSPLLIEYQGLLKLIRNIKAMALNGLWDDVVEQEIVYIQSIERISQINVPANIPSTVQLQFRQLLQDILDTESQVKELLQNRMQELAVLIQQSQNQKSINNTYAEFSDDILPGKPQP.

The required for homodimerization stretch occupies residues 1 to 50; that stretch reads MENLSPLLIEYQGLLKLIRNIKAMALNGLWDDVVEQEIVYIQSIERISQI. Residues 60–98 form a fliD binding region; that stretch reads VQLQFRQLLQDILDTESQVKELLQNRMQELAVLIQQSQN.

The protein belongs to the FliT family. As to quaternary structure, homodimer. Interacts with FliD and FlhC.

The protein resides in the cytoplasm. It is found in the cytosol. Its function is as follows. Dual-function protein that regulates the transcription of class 2 flagellar operons and that also acts as an export chaperone for the filament-capping protein FliD. As a transcriptional regulator, acts as an anti-FlhDC factor; it directly binds FlhC, thus inhibiting the binding of the FlhC/FlhD complex to class 2 promoters, resulting in decreased expression of class 2 flagellar operons. As a chaperone, effects FliD transition to the membrane by preventing its premature polymerization, and by directing it to the export apparatus. This chain is Flagellar protein FliT, found in Dickeya chrysanthemi (Pectobacterium chrysanthemi).